The chain runs to 286 residues: MLSPFLAYLLSVVLLCRIARSQYSSDQCSWRGSGLTHEGHTRGVEQVYLRCAQGFLEWLYPTGAIIVNLRPNTLSPAASLLSVCIKPSKESSGTHIYLDRLGKLRLLLSEGDQAEGKVHCFNIQDGALFIEAVPQRDISRKITAFQYELVNHRPGADPQSLSAPCQPCTDAEVLLAVCTSDFVARGRILGVSEEDEQTSVTVSLSHLYRQKTQVFVSGGGRAKRWTGFVKMSRQCGVKPGDGEFLFTGTVRFGEAWLSCAPRYKDFLRVYQDARQQGTNPCHLETD.

A signal peptide spans 1-21 (MLSPFLAYLLSVVLLCRIARS). 5 disulfide bridges follow: cysteine 28-cysteine 51, cysteine 84-cysteine 120, cysteine 165-cysteine 235, cysteine 168-cysteine 259, and cysteine 178-cysteine 281.

This sequence belongs to the meteorin family.

Its subcellular location is the secreted. In terms of biological role, hormone induced following exercise or cold exposure that promotes energy expenditure. Induced either in the skeletal muscle after exercise or in adipose tissue following cold exposure and is present in the circulation. Able to stimulate energy expenditure associated with the browning of the white fat depots and improves glucose tolerance. The chain is Meteorin-like protein (metrnl) from Danio rerio (Zebrafish).